We begin with the raw amino-acid sequence, 337 residues long: Integrase/recombinase (337 aa).

Residues 14 to 94 (VKVLDQLRER…ALLFFYGKVL (81 aa)) form the Core-binding (CB) domain. Residues 112-328 (RLPVVLTPDE…GGAGVRSPLD (217 aa)) enclose the Tyr recombinase domain. Residues Arg146, Lys171, His277, Arg280, and His303 contribute to the active site. Residue Tyr312 is the O-(3'-phospho-DNA)-tyrosine intermediate of the active site.

The protein belongs to the 'phage' integrase family.

In terms of biological role, putative integrase believed to be involved in the insertion of antibiotic resistance genes into plasmids and transposons. The polypeptide is Integrase/recombinase (int) (Escherichia coli).